The following is a 430-amino-acid chain: Histidinol dehydrogenase (430 aa).

Residues S237, Q259, and H262 each contribute to the substrate site. Zn(2+) contacts are provided by Q259 and H262. Catalysis depends on proton acceptor residues E327 and H328. Positions 328, 361, 415, and 420 each coordinate substrate. D361 is a binding site for Zn(2+). H420 contributes to the Zn(2+) binding site.

Belongs to the histidinol dehydrogenase family. Zn(2+) is required as a cofactor.

It catalyses the reaction L-histidinol + 2 NAD(+) + H2O = L-histidine + 2 NADH + 3 H(+). It functions in the pathway amino-acid biosynthesis; L-histidine biosynthesis; L-histidine from 5-phospho-alpha-D-ribose 1-diphosphate: step 9/9. Catalyzes the sequential NAD-dependent oxidations of L-histidinol to L-histidinaldehyde and then to L-histidine. The sequence is that of Histidinol dehydrogenase from Mesorhizobium japonicum (strain LMG 29417 / CECT 9101 / MAFF 303099) (Mesorhizobium loti (strain MAFF 303099)).